A 289-amino-acid chain; its full sequence is ATP synthase gamma chain (289 aa).

It belongs to the ATPase gamma chain family. As to quaternary structure, F-type ATPases have 2 components, CF(1) - the catalytic core - and CF(0) - the membrane proton channel. CF(1) has five subunits: alpha(3), beta(3), gamma(1), delta(1), epsilon(1). CF(0) has three main subunits: a, b and c.

The protein localises to the cell inner membrane. Functionally, produces ATP from ADP in the presence of a proton gradient across the membrane. The gamma chain is believed to be important in regulating ATPase activity and the flow of protons through the CF(0) complex. The polypeptide is ATP synthase gamma chain (Mannheimia succiniciproducens (strain KCTC 0769BP / MBEL55E)).